The chain runs to 424 residues: MIVKKISKLNEKELDIILNRNKTNISGILPTVSEILENVQKNGDNALKEYTKKFDGVDIDNFKVSTEEIDKAYDKIDSKVVESLEKAYENIREFHEIQFKNLNEWEIDKKGIKAGQIIRPVEKAGCYVPGGRAFYPSTVLMTVTPAKVAGVKEVIVTSPPNGTEGNPATLVASDIAKADGIYKIGGAQAIGALAYGTKSIPKVDIIVGPGNIFVTAAKKLVYGEVSIDFPAGPSEVLIMCDESSNEEYVAMDFLAQAEHDPNASCIITVTSEKKAEKIKERILMEIKTAKRTEIIEKSILNSAIVIGSIDECIELSNSYAPEHLEIMTKNPREVLKSIENAGSIFLGNYAPVPVGDYASGTNHVLPTSACAKMYSGLSVETFIKKPTVQELTKEGLLGISDIVTTLAEAEGLFNHSEAVKRRLN.

Residues Tyr-127, Gln-188, and Asn-211 each coordinate NAD(+). Ser-234, Gln-256, and His-259 together coordinate substrate. Positions 256 and 259 each coordinate Zn(2+). Residues Glu-322 and His-323 each act as proton acceptor in the active site. The substrate site is built by His-323, Asp-356, Glu-410, and His-415. Asp-356 lines the Zn(2+) pocket. His-415 contributes to the Zn(2+) binding site.

This sequence belongs to the histidinol dehydrogenase family. Requires Zn(2+) as cofactor.

It catalyses the reaction L-histidinol + 2 NAD(+) + H2O = L-histidine + 2 NADH + 3 H(+). It participates in amino-acid biosynthesis; L-histidine biosynthesis; L-histidine from 5-phospho-alpha-D-ribose 1-diphosphate: step 9/9. In terms of biological role, catalyzes the sequential NAD-dependent oxidations of L-histidinol to L-histidinaldehyde and then to L-histidine. The polypeptide is Histidinol dehydrogenase (Methanococcus maripaludis (strain DSM 14266 / JCM 13030 / NBRC 101832 / S2 / LL)).